The primary structure comprises 104 residues: Large ribosomal subunit protein uL24 (104 aa).

Belongs to the universal ribosomal protein uL24 family. In terms of assembly, part of the 50S ribosomal subunit.

In terms of biological role, one of two assembly initiator proteins, it binds directly to the 5'-end of the 23S rRNA, where it nucleates assembly of the 50S subunit. Functionally, one of the proteins that surrounds the polypeptide exit tunnel on the outside of the subunit. In Clostridium perfringens (strain ATCC 13124 / DSM 756 / JCM 1290 / NCIMB 6125 / NCTC 8237 / Type A), this protein is Large ribosomal subunit protein uL24.